Here is a 149-residue protein sequence, read N- to C-terminus: Gonadotropin subunit beta-2 (149 aa).

An N-terminal signal peptide occupies residues 1-24; sequence MARIPECTILLLLCMCVLAVPAQC. Disulfide bonds link Cys-30–Cys-78, Cys-44–Cys-93, Cys-47–Cys-131, Cys-55–Cys-109, Cys-59–Cys-111, and Cys-114–Cys-121. Asn-34 carries an N-linked (GlcNAc...) asparagine glycan.

This sequence belongs to the glycoprotein hormones subunit beta family. In terms of assembly, heterodimer of an alpha and a beta chain.

The protein localises to the secreted. Involved in gametogenesis and steroidogenesis. The sequence is that of Gonadotropin subunit beta-2 (cgbb) from Clupea pallasii (Pacific herring).